The following is a 533-amino-acid chain: MERLKQLEEKRRQLKELRERRKQASLFPGSETMGHHPTEVHAKATMVSVSVQTDMEEGSKIQEPQSAYLRRKEVITYDKGIQTDQIEEEQLQENENHTTTDAVAIETTAADENNKDKAENDQPRLELAKPFLVEEAAATLSNASFARLETEVSASGQQAPSNMQQDKDNLMQWNMVSENLQSETDCDCIAQEYDPGKGVLVVVYLRLPPADLQYASSEAAWSVVNVVKCDNASGRNGLLIDMVEFRGTRIMTATILRRYHPESNVISILLATLTGKIILYELRLKQKKPETPVVYVVQRNMVARHYFQHPVVAVIETSSVQDQERVLVAADNGNIMELSCLDLTVLRKPQQLRPVPLSQLLSLENDTCTYTERLQRLAKFDEVGIACMAYTSEDPQYVWIGGEDGGIYKVFWDQPGPLYLSLDNNGFQPAENHSTRVTGLEFHWDDARRLMLLLSCSTDWTVRLWDARAGKAIIGAPLLLGGPVLRARWLEKNNGGENSRTLRCQVWCADGRLVVVNWAFDAKTSLYTATVIS.

A compositionally biased stretch (basic and acidic residues) spans 1–19 (MERLKQLEEKRRQLKELRE). Residues 1 to 36 (MERLKQLEEKRRQLKELRERRKQASLFPGSETMGHH) are disordered. WD repeat units follow at residues 380-422 (FDEV…YLSL) and 432-475 (NHST…AIIG).

In terms of assembly, interacts with NUM1, when DYN1 is present.

Its subcellular location is the cytoplasm. The protein resides in the cytoskeleton. In terms of biological role, required for viability in the absence of the kinesin-related CIN8 mitotic motor. May be a dynein intermediate chain. This is WD repeat-containing protein PAC11 (PAC11) from Saccharomyces cerevisiae (strain ATCC 204508 / S288c) (Baker's yeast).